We begin with the raw amino-acid sequence, 221 residues long: Pre-rRNA-processing protein SRD1 (221 aa).

Residues Ser101–Asn110 show a composition bias toward polar residues. Disordered regions lie at residues Ser101–Asn121 and Ala137–Pro161. The span at Lys142–Lys155 shows a compositional bias: basic residues. The GATA-type zinc finger occupies Cys168–Cys193. The disordered stretch occupies residues Leu201 to Pro221. Positions Lys203 to Pro221 are enriched in basic and acidic residues.

It localises to the cytoplasm. The protein resides in the nucleus. Functionally, plays a direct or indirect role in pre-rRNA processing. This is Pre-rRNA-processing protein SRD1 (SRD1) from Saccharomyces cerevisiae (strain ATCC 204508 / S288c) (Baker's yeast).